A 431-amino-acid polypeptide reads, in one-letter code: MSNWTPAADQKNQGTLEFEISRAQVEEGLEKAFQRNKNQVSIPGFRKGKVTKALFFSKFGEEALYQEAMDIVLPAAYEAAVEEAGITPVGRPNIEPVSMNKGEAWTLKAEVTTAPAIKLGEYLNLEVAAEDTAVSDADVDAEIKRLQDGQAELVLQEESVKAEDGDTVVIDFDGSVDGDHFDGGQANDFSLALGSGQFIPGFEEQLVGHTAGEDVEVKVTFPEDYQAADLAGKEALFEVKIHELKRKELPELDDEFAKDVDEEVETLAELKEKTAKKLADDKEAAAKSAFEDAVITKAVDNASVDGDAIPDAMIEEDVHRQVDQYLGQLQQQGISREMFFQISGQTEEDLHKQFEEGAATRVKTNLVLEAIVKAEGIEPSAEQVTEEINNLATQYNMDAEQVRSSLSDSLLKHDIAMREVIKKITDSAKAK.

A PPIase FKBP-type domain is found at 165–250; it reads GDTVVIDFDG…IHELKRKELP (86 aa).

Belongs to the FKBP-type PPIase family. Tig subfamily.

It localises to the cytoplasm. It carries out the reaction [protein]-peptidylproline (omega=180) = [protein]-peptidylproline (omega=0). Involved in protein export. Acts as a chaperone by maintaining the newly synthesized protein in an open conformation. Functions as a peptidyl-prolyl cis-trans isomerase. The chain is Trigger factor from Leuconostoc citreum (strain KM20).